The sequence spans 141 residues: Large-conductance mechanosensitive channel (141 aa).

The next 3 membrane-spanning stretches (helical) occupy residues 8–28, 38–58, and 80–100; these read FALK…AAFG, IIMP…FFPL, and GNFL…FLIV.

It belongs to the MscL family. In terms of assembly, homopentamer.

Its subcellular location is the cell inner membrane. Channel that opens in response to stretch forces in the membrane lipid bilayer. May participate in the regulation of osmotic pressure changes within the cell. This Beijerinckia indica subsp. indica (strain ATCC 9039 / DSM 1715 / NCIMB 8712) protein is Large-conductance mechanosensitive channel.